The following is a 1531-amino-acid chain: DNA topoisomerase 2-alpha (1531 aa).

Methionine 1 is modified (N-acetylmethionine). A Phosphoserine modification is found at serine 4. Lysine 17 is covalently cross-linked (Glycyl lysine isopeptide (Lys-Gly) (interchain with G-Cter in SUMO2)). Residues asparagine 91, asparagine 120, and 148 to 150 each bind ATP; that span reads SSN. Glycyl lysine isopeptide (Lys-Gly) (interchain with G-Cter in SUMO2) cross-links involve residues lysine 156 and lysine 157. 161 to 168 serves as a coordination point for ATP; sequence GRNGYGAK. Lysine 261 participates in a covalent cross-link: Glycyl lysine isopeptide (Lys-Gly) (interchain with G-Cter in SUMO2). Phosphothreonine is present on threonine 282. Positions 342–344 are interaction with DNA; it reads KKK. Residue lysine 352 forms a Glycyl lysine isopeptide (Lys-Gly) (interchain with G-Cter in SUMO2) linkage. Residue 376–378 participates in ATP binding; sequence QTK. Residues lysine 386, lysine 397, lysine 416, lysine 418, lysine 425, and lysine 440 each participate in a glycyl lysine isopeptide (Lys-Gly) (interchain with G-Cter in SUMO2) cross-link. In terms of domain architecture, Toprim spans 455-572; it reads CTLILTEGDS…SLLRHRFLEE (118 aa). A Mg(2+)-binding site is contributed by glutamate 461. Glycyl lysine isopeptide (Lys-Gly) (interchain with G-Cter in SUMO2) cross-links involve residues lysine 466, lysine 480, and lysine 529. Mg(2+) is bound by residues aspartate 541 and aspartate 543. Glycyl lysine isopeptide (Lys-Gly) (interchain with G-Cter in SUMO2) cross-links involve residues lysine 584, lysine 599, lysine 614, lysine 622, lysine 625, lysine 632, lysine 639, lysine 655, lysine 662, and lysine 676. Positions 715–1171 constitute a Topo IIA-type catalytic domain; the sequence is IPSMVDGLKP…SPSDLWKEDL (457 aa). The active-site O-(5'-phospho-DNA)-tyrosine intermediate is the tyrosine 805. Residues 990–999 form an interaction with DNA region; that stretch reads KLQTSLTCNS. A Nuclear export signal motif is present at residues 1018–1028; it reads ILRDFFELRLK. A Glycyl lysine isopeptide (Lys-Gly) (interchain with G-Cter in SUMO2) cross-link involves residue lysine 1075. Disordered stretches follow at residues 1090-1123 and 1184-1531; these read WKEA…DSGP and KEKQ…DDLF. Positions 1099-1108 are enriched in acidic residues; the sequence is DEEENEESDN. Residue serine 1106 is modified to Phosphoserine; by CK1. Glycyl lysine isopeptide (Lys-Gly) (interchain with G-Cter in SUMO2) cross-links involve residues lysine 1114, lysine 1196, and lysine 1204. Threonine 1205 is subject to Phosphothreonine. Serine 1213 is modified (phosphoserine). A Glycyl lysine isopeptide (Lys-Gly) (interchain with G-Cter in SUMO2) cross-link involves residue lysine 1228. Lysine 1240 is covalently cross-linked (Glycyl lysine isopeptide (Lys-Gly) (interchain with G-Cter in SUMO1); alternate). A Glycyl lysine isopeptide (Lys-Gly) (interchain with G-Cter in SUMO2); alternate cross-link involves residue lysine 1240. Position 1244 is a phosphothreonine (threonine 1244). Phosphoserine is present on serine 1247. Residues 1256-1272 show a composition bias toward basic and acidic residues; sequence EGLKQRLEKKQKREPGT. Glycyl lysine isopeptide (Lys-Gly) (interchain with G-Cter in SUMO2) cross-links involve residues lysine 1259, lysine 1276, lysine 1283, and lysine 1286. A phosphoserine mark is found at serine 1295, serine 1297, serine 1299, and serine 1302. Threonine 1327 is subject to Phosphothreonine. The span at 1330–1349 shows a compositional bias: acidic residues; that stretch reads LDSDEDFSDFDEKTDDEDFV. Phosphoserine occurs at positions 1332 and 1337. Threonine 1343 carries the post-translational modification Phosphothreonine; by PLK3. A phosphoserine mark is found at serine 1351 and serine 1354. Residues lysine 1363, lysine 1367, and lysine 1373 each participate in a glycyl lysine isopeptide (Lys-Gly) (interchain with G-Cter in SUMO2) cross-link. A phosphoserine mark is found at serine 1374 and serine 1377. Lysine 1385 participates in a covalent cross-link: Glycyl lysine isopeptide (Lys-Gly) (interchain with G-Cter in SUMO2). Serine 1387, serine 1391, serine 1392, and serine 1393 each carry phosphoserine. Over residues 1406–1431 the composition is skewed to low complexity; sequence TNPVPKKNVTVKKTAAKSQSSTSTTG. Residue lysine 1422 forms a Glycyl lysine isopeptide (Lys-Gly) (interchain with G-Cter in SUMO2); alternate linkage. The residue at position 1422 (lysine 1422) is an N6-acetyllysine; alternate. The interval 1433-1439 is interaction with PLSCR1; sequence KKRAAPK. Lysine 1442 is covalently cross-linked (Glycyl lysine isopeptide (Lys-Gly) (interchain with G-Cter in SUMO2); alternate). At lysine 1442 the chain carries N6-acetyllysine; alternate. Serine 1449 carries the post-translational modification Phosphoserine. Residues lysine 1454 and lysine 1459 each participate in a glycyl lysine isopeptide (Lys-Gly) (interchain with G-Cter in SUMO2) cross-link. A Phosphoserine; by CK2 modification is found at serine 1469. The residue at position 1470 (threonine 1470) is a Phosphothreonine. Phosphoserine is present on residues serine 1471, serine 1474, and serine 1476. Glycyl lysine isopeptide (Lys-Gly) (interchain with G-Cter in SUMO2) cross-links involve residues lysine 1484 and lysine 1492. The segment covering 1491–1502 has biased composition (basic and acidic residues); sequence SKGESDDFHMDF. Phosphoserine occurs at positions 1495, 1504, and 1525.

This sequence belongs to the type II topoisomerase family. Homodimer. Interacts with COPS5. Interacts with RECQL5; this stimulates DNA decatenation. Interacts with SETMAR; stimulates the topoisomerase activity. Interacts with DHX9; this interaction occurs in a E2 enzyme UBE2I- and RNA-dependent manner, negatively regulates DHX9-mediated double-stranded DNA and RNA duplex helicase activity and stimulates TOP2A-mediated supercoiled DNA relaxation activity. Interacts with HNRNPU (via C-terminus); this interaction protects the topoisomerase TOP2A from degradation and positively regulates the relaxation of supercoiled DNA in a RNA-dependent manner. Interacts with MCM3AP isoform GANP. Interacts with ERCC6. Interacts with PLSCR1. Interacts with GCNA; this interaction allows the resolution of topoisomerase II (TOP2A) DNA-protein cross-links. Interacts with POL1RA/RPA1 (via dock II) and UBTF in the context of Pol I complex; may assist Pol I transcription initiation by releasing supercoils occurring during DNA unwinding. Interacts with TPRN; TPRN interacts with a number of DNA damage response proteins, is recruited to sites of DNA damage and may play a role in DNA damage repair. Mg(2+) serves as cofactor. Mn(2+) is required as a cofactor. It depends on Ca(2+) as a cofactor. Phosphorylation has no effect on catalytic activity. However, phosphorylation at Ser-1106 by CSNK1D/CK1 promotes DNA cleavable complex formation. Post-translationally, (Microbial infection) Deubiquitinated by Epstein-Barr virus BPLF1; leading to stabilized SUMOylated TOP2A trapped in cleavage complexes, which halts the DNA damage response to TOP2A-induced double-strand DNA breaks. In terms of processing, SUMOylated. As to expression, expressed in the tonsil, spleen, lymph node, thymus, skin, pancreas, testis, colon, kidney, liver, brain and lung. Also found in high-grade lymphomas, squamous cell lung tumors and seminomas.

The protein resides in the cytoplasm. Its subcellular location is the nucleus. It is found in the nucleoplasm. It localises to the nucleolus. The catalysed reaction is ATP-dependent breakage, passage and rejoining of double-stranded DNA.. Its activity is regulated as follows. Specifically inhibited by the intercalating agent amsacrine. In terms of biological role, key decatenating enzyme that alters DNA topology by binding to two double-stranded DNA molecules, generating a double-stranded break in one of the strands, passing the intact strand through the broken strand, and religating the broken strand. May play a role in regulating the period length of BMAL1 transcriptional oscillation. This Homo sapiens (Human) protein is DNA topoisomerase 2-alpha (TOP2A).